Consider the following 479-residue polypeptide: Poly(A) polymerase catalytic subunit (479 aa).

Residues D202 and D204 contribute to the active site. 3 residues coordinate Ca(2+): D202, D204, and D253.

It belongs to the poxviridae poly(A) polymerase catalytic subunit family. In terms of assembly, heterodimer of a large (catalytic) subunit and a small (regulatory) subunit.

The enzyme catalyses RNA(n) + ATP = RNA(n)-3'-adenine ribonucleotide + diphosphate. In terms of biological role, polymerase that creates the 3'-poly(A) tail of mRNA's. The sequence is that of Poly(A) polymerase catalytic subunit (OPG063) from Mus musculus (Mouse).